The chain runs to 521 residues: HTH-type transcriptional regulatory protein TyrR (521 aa).

The 71-residue stretch at 2 to 72 (RLEVFCQDRI…GVTDVRTVPY (71 aa)) folds into the ACT domain. A PAS domain is found at 78–120 (EHRVLSALLVAMPEPVFSVDLRTKVELANPAAQNLFNLDENKI). Residues 207–436 (IVAVTPRMRQ…LKNALYRALT (230 aa)) form the Sigma-54 factor interaction domain. Residues 235–242 (GDTGTGKD) and 298–307 (ANGGSVLLDE) each bind ATP. The H-T-H motif DNA-binding region spans 489–509 (STRKLAKRLGVSHTAIANKLR).

Homodimer. In presence of tyrosine (or high concentrations of phenylalanine or tryptophan) and ATP, it self-associates to form an hexamer.

It localises to the cytoplasm. Dual transcriptional regulator of the TyrR regulon, which includes a number of genes coding for proteins involved in the biosynthesis or transport of the three aromatic amino acids, phenylalanine, tyrosine and tryptophan. These three aromatic amino acids act as effectors which bind to the TyrR protein to form an active regulatory protein. Acts by binding specifically to TyrR boxes in the promoter region of the target genes. In Enterobacter agglomerans (Erwinia herbicola), this protein is HTH-type transcriptional regulatory protein TyrR.